Here is a 230-residue protein sequence, read N- to C-terminus: Secretory carrier-associated membrane protein 4 (230 aa).

Residues 1 to 39 are Cytoplasmic-facing; it reads MAGKENNFPPLPPFLPLKPCFYQDFSDEIPVEHQVLVKR. The next 4 membrane-spanning stretches (helical) occupy residues 40 to 60, 61 to 81, 106 to 126, and 149 to 169; these read IYRLWMFYCATLGVNLVACLA, WWIAGGAGANFGLALLWLVLF, MTFFFIFGAQFVLTVIQAIGF, and VVMLVPAILFSLSALVMAVTI. Residues 170 to 230 are Cytoplasmic-facing; it reads VKVHRIYRGA…SYSSSGGHWP (61 aa). T194 carries the phosphothreonine modification.

It belongs to the SCAMP family.

Its subcellular location is the membrane. Probably involved in membrane protein trafficking. This chain is Secretory carrier-associated membrane protein 4 (Scamp4), found in Mus musculus (Mouse).